The sequence spans 228 residues: Peptide deformylase (228 aa).

Disordered stretches follow at residues methionine 1 to valine 28 and glycine 116 to arginine 138. 2 stretches are compositionally biased toward polar residues: residues threonine 8–serine 18 and asparagine 123–cysteine 133. Fe cation is bound by residues cysteine 141 and histidine 183. Residue glutamate 184 is part of the active site. Histidine 187 contacts Fe cation.

Belongs to the polypeptide deformylase family. Fe(2+) is required as a cofactor.

The catalysed reaction is N-terminal N-formyl-L-methionyl-[peptide] + H2O = N-terminal L-methionyl-[peptide] + formate. In terms of biological role, removes the formyl group from the N-terminal Met of newly synthesized proteins. Requires at least a dipeptide for an efficient rate of reaction. N-terminal L-methionine is a prerequisite for activity but the enzyme has broad specificity at other positions. This chain is Peptide deformylase, found in Tropheryma whipplei (strain Twist) (Whipple's bacillus).